Reading from the N-terminus, the 415-residue chain is Histidine--tRNA ligase (415 aa).

This sequence belongs to the class-II aminoacyl-tRNA synthetase family. As to quaternary structure, homodimer.

The protein localises to the cytoplasm. The enzyme catalyses tRNA(His) + L-histidine + ATP = L-histidyl-tRNA(His) + AMP + diphosphate + H(+). The chain is Histidine--tRNA ligase from Clostridium botulinum (strain Loch Maree / Type A3).